We begin with the raw amino-acid sequence, 485 residues long: MKVLFVTSEAYPLVKTGGLGDVAGALPAALRDIGVDARILLPAYPDAMRRARLTGKTVPLGNPLGVGETRLLEGTMPDTGCPLWLLDCPAMYERTGGPYMMYSGVDWPDNFRRFALLSKVAAMIGTAGDLMDWRPDVLHGHDWQTGLVPAYLNAWGARRPPFLFSIHNMEYRGLFGPEILDLIGLPRSQFSINGLEFHGLVSTLKAGIVYAQAVATVSPSYAAEIKTPVGGQGLEGLLQARAGDLSGILNGIDSNAWNPQTDPYLAAPIDGADPAPGKRINKDMLKRRMGLDADGDRPLFGLVSRFVAQKGIDLVVAALPGMIAGGAQVAILGAGDTGLEAALNDIVGRYPGAAAVHVGYDEHLAHLIEGAADFLLVPSRFEPCGLTQLYALRYGTIPVVRRTGGLADSVSHLDDGPNGTGIVFDHALPDALEWAIGRAMTLYRDKATLNKVRQRGMSQDFSWKRSAKEYLRVYGSMVGGDVHRP.

Position 15 (Lys15) interacts with ADP-alpha-D-glucose.

The protein belongs to the glycosyltransferase 1 family. Bacterial/plant glycogen synthase subfamily.

The catalysed reaction is [(1-&gt;4)-alpha-D-glucosyl](n) + ADP-alpha-D-glucose = [(1-&gt;4)-alpha-D-glucosyl](n+1) + ADP + H(+). It participates in glycan biosynthesis; glycogen biosynthesis. Functionally, synthesizes alpha-1,4-glucan chains using ADP-glucose. The protein is Glycogen synthase of Rhodospirillum rubrum (strain ATCC 11170 / ATH 1.1.1 / DSM 467 / LMG 4362 / NCIMB 8255 / S1).